Consider the following 323-residue polypeptide: Aspartate carbamoyltransferase catalytic subunit (323 aa).

Carbamoyl phosphate contacts are provided by R55 and T56. K83 is an L-aspartate binding site. Carbamoyl phosphate contacts are provided by R105, H133, and Q136. L-aspartate is bound by residues R166 and R220. Carbamoyl phosphate contacts are provided by G261 and P262.

Belongs to the aspartate/ornithine carbamoyltransferase superfamily. ATCase family. In terms of assembly, heterododecamer (2C3:3R2) of six catalytic PyrB chains organized as two trimers (C3), and six regulatory PyrI chains organized as three dimers (R2).

The catalysed reaction is carbamoyl phosphate + L-aspartate = N-carbamoyl-L-aspartate + phosphate + H(+). Its pathway is pyrimidine metabolism; UMP biosynthesis via de novo pathway; (S)-dihydroorotate from bicarbonate: step 2/3. Its function is as follows. Catalyzes the condensation of carbamoyl phosphate and aspartate to form carbamoyl aspartate and inorganic phosphate, the committed step in the de novo pyrimidine nucleotide biosynthesis pathway. This chain is Aspartate carbamoyltransferase catalytic subunit, found in Acidothermus cellulolyticus (strain ATCC 43068 / DSM 8971 / 11B).